A 662-amino-acid chain; its full sequence is MRGCLQLARWLSAAPNWPASSLLKAPGSSFATRLFTTTSSYKAKGPSKVPMTDLEARISAIPIERYRNFCIVAHVDHGKSTLSDRLLELTGTIKPGMNKQVLDKLDVERERGITVKAQTCTMIYNHKGEDYLLHLVDTPGHVDFRAEVSRSYASCGGALLLVDASQGIQAQTVANFYLAFSQGLELIPVINKVDLPSAEPERALEQLEQSFELDTEDAVLVSAKTGLNVEQLLPTVVEKIPAPIGDCKRPLRMLLVDSWYDSYKGVICLVRVFDGEVRAGQQVVSFATGIKYYVGEVGIQYPLETPQTVLRAGQVGYIFFNPGMKRSKEAKIGDTFTTVGSEKAVQPLPGFEEPKAMVFVAAYPVDADHFEHLEDSINQLVLNDRSITVQKESSEALGAGFRLGFLGTLHCSVFEDRLRQEHGASIIITPPSVPVKVVWKDGKEDIITNPNRFPDEDDVRMKVAELQEPYVMATLTFPDEYLGTVIELCEANRGEQKSLEYFTPTQVILKYELPLAQLVDDFFGKLKGGTKGYASLDYEESGWKPSNIVKLQLLVNKAPVDAVARLVHYSQTDRLGRQWVTKFKEHVDRQLFEIIIQAAVGKKIVARETVKPYRKDVLAKLHASDVSRRRKLLEKQKEGRKRLRAVGNVVIEHKAFQAFLAK.

The transit peptide at 1–42 (MRGCLQLARWLSAAPNWPASSLLKAPGSSFATRLFTTTSSYK) directs the protein to the mitochondrion. The tr-type G domain occupies 64–244 (ERYRNFCIVA…TVVEKIPAPI (181 aa)). GTP contacts are provided by residues 73-80 (AHVDHGKS), 137-141 (DTPGH), and 191-194 (NKVD).

Belongs to the TRAFAC class translation factor GTPase superfamily. Classic translation factor GTPase family. LepA subfamily.

It is found in the mitochondrion inner membrane. It carries out the reaction GTP + H2O = GDP + phosphate + H(+). Functionally, promotes mitochondrial protein synthesis. May act as a fidelity factor of the translation reaction, by catalyzing a one-codon backward translocation of tRNAs on improperly translocated ribosomes. Binds to mitochondrial ribosomes in a GTP-dependent manner. This Emericella nidulans (strain FGSC A4 / ATCC 38163 / CBS 112.46 / NRRL 194 / M139) (Aspergillus nidulans) protein is Translation factor guf1, mitochondrial (guf1).